We begin with the raw amino-acid sequence, 1499 residues long: MMMARKQDVRIPTYNISVVGLSGTEKEKGQCGIGKSCLCNRFVRPSADEFHLDHTSVLSTSDFGGRVVNNDHFLYWGEVSRSLEDCVECKMHIVEQTEFIDDQTFQPHRSTALQPYIKRAAATKLASAEKLMYFCTDQLGLEQDFEQKQMPDGKLLVDGFLLGIDVSRGMNRNFDDQLKFVSNLYNQLAKTKKPIVIVLTKCDEGVERYIRDAHTFALSKKNLQVVETSARSNVNVDLAFSTLVQLIDKSRGKTKIIPYFEALKQQSQQIATAKDKYEWLVSRIVKSHNENWLSVSRKMQASPEYQDYVYLEGTQKAKKLFLQHIHRLKHEHIERRRKLYLAALPLAFEALIPNLDEVDHLSCIKAKKLLETKPEFLKWFVVLEETPWDETSHIDNMENERIPFDLMDTVPAEQLYETHLEKLRNERKRAEMRRAFKENLETSPFITPGKPWEEARSFIMNEDFYQWLEESVYMDIYGKHQKQIIDRAKEEFQELLLEYSELFYELELDAKPSKEKMGVIQDVLGEEQRFKALQKLQAERDALILKHIHFVYHPTKETCPSCPACVDAKIEHLISSRFIRPSDRNQKNSLSDPNIDRINLVILGKDGLARELANEIRALCTNDDKYVIDGKMYELSLRPIEGNVRLPVNSFQTPTFQPHGCLCLYNSKESLSYVVESIEKSRESTLGRRDNHLVHLPLTLILVNKRGDTSGETLHSLIQQGQQIASKLQCVFLDPASAGIGYGRNINEKQISQVLKGLLDSKRNLNLVSSTASIKDLADVDLRIVMCLMCGDPFSADDILSPVLQSQTCKSSHCGSSNSVLLELPIGVHKKRIELSVLSYHSSFSIRKSRLVHGYIVFYSAKRKASLAMLRAFLCEVQDIIPIQLVALTDGAIDVLDNDLSREQLTEGEEIAQEIDGRFTSIPCSQPQHKLELFHPFFKDVVEKKNIIEATHMYDNVAEACSTTEEVFNSPRAGSPLCNSNLQDSEEDVEPPSYHLFREDATLPSLSKDHSKFSMELEGNDGLSFIMSNFESKLNNKVPPPVKPKPPVHFEITKDLSYLDQGHREGQRKSMSSSPWMPQDGFDPSDYAEPMDAVVKPRNEEENIYSVPHDSTQGKIITIRNINKAQSNGSGNGSDSEMDTSSLERGRKVSAVSKPVLYRTRCTRLGRFASYRTSFSVGSDDELGPIRKKEEDQASQGYKGDNAVIPYETDEDPRRRNILRSLRRNTKKPKPKPRPSITKATWESNYFGVPLTTVVTPEKPIPIFIERCIEYIEATGLSTEGIYRVSGNKSEMESLQRQFDQDHNLDLAEKDFTVNTVAGAMKSFFSELPDPLVPYSMQIDLVEAHKINDREQKLHALKEVLKKFPKENHEVFKYVISHLNRVSHNNKVNLMTSENLSICFWPTLMRPDFSSMDALTATRSYQTIIELFIQQCPFFFYNRPISEPPGAAPGSPSAMAPTVPFLTSTPATSQPSPPQSPPPTPQSPMQPLLSSQLQAEHTL.

Positions 1 to 266 are has GTPase activity, required for proper localization; the sequence is MMMARKQDVR…IPYFEALKQQ (266 aa). Residues Lys-28, 33–37, Leu-52, Ser-56, 95–97, 201–203, and 229–231 each bind GTP; these read IGKSC, EQT, KCD, and SAR. 4 FF domains span residues 270-327, 368-422, 429-483, and 485-550; these read IATA…HIHR, KLLE…HLEK, RAEM…HQKQ, and IDRA…HIHF. Tyr-308 is modified (phosphotyrosine). A Phosphoserine modification is found at Ser-589. The region spanning 592 to 767 is the pG1 pseudoGTPase domain; that stretch reads DPNIDRINLV…LLDSKRNLNL (176 aa). 2 positions are modified to phosphoserine: Ser-770 and Ser-773. In terms of domain architecture, pG2 pseudoGTPase spans 783 to 947; the sequence is RIVMCLMCGD…FKDVVEKKNI (165 aa). Phosphoserine occurs at positions 970, 975, 985, and 1072. Tyr-1087 carries the post-translational modification Phosphotyrosine. Tyr-1105 carries the post-translational modification Phosphotyrosine; by ABL2 and PTK6. Residues 1124–1141 show a composition bias toward polar residues; sequence KAQSNGSGNGSDSEMDTS. The segment at 1124-1148 is disordered; that stretch reads KAQSNGSGNGSDSEMDTSSLERGRK. 6 positions are modified to phosphoserine: Ser-1134, Ser-1142, Ser-1150, Ser-1176, Ser-1179, and Ser-1221. Positions 1177-1207 are disordered; sequence VGSDDELGPIRKKEEDQASQGYKGDNAVIPY. Residues 1213–1236 are required for phospholipid binding and regulation of the substrate preference; sequence PRRRNILRSLRRNTKKPKPKPRPS. A Phosphothreonine modification is found at Thr-1226. Ser-1236 carries the phosphoserine modification. Positions 1249–1436 constitute a Rho-GAP domain; the sequence is VPLTTVVTPE…LFIQQCPFFF (188 aa). The disordered stretch occupies residues 1446 to 1499; the sequence is GAAPGSPSAMAPTVPFLTSTPATSQPSPPQSPPPTPQSPMQPLLSSQLQAEHTL. Over residues 1448-1470 the composition is skewed to low complexity; it reads APGSPSAMAPTVPFLTSTPATSQ. Positions 1471-1484 are enriched in pro residues; the sequence is PSPPQSPPPTPQSP. Phosphoserine is present on residues Ser-1472 and Ser-1476. Thr-1480 bears the Phosphothreonine mark. A Phosphoserine modification is found at Ser-1483. Residues 1485 to 1499 show a composition bias toward low complexity; the sequence is MQPLLSSQLQAEHTL.

In terms of assembly, interacts with RASA1. Interacts with the general transcription factor GTF2I, the interaction sequesters GTF2I in the cytoplasm. Post-translationally, phosphorylation of Tyr-1105 by PTK6 promotes the association with RASA1, inactivating RHOA while activating RAS. Phosphorylation at Tyr-308 by PDGFRA inhibits binding to GTF2I. Phosphorylated by PRKCA at Ser-1221 and Thr-1226, induces relocalization from the cytoplasm to regions of plasma membrane ruffling and prevents the binding and substrate specificity regulation by phospholipids. In brain, phosphorylated by FYN and SRC. During focal adhesion formation, phosphorylated by MAPK1 and MAPK3 at the C-terminal region, probably at Ser-1451, Ser-1476, Thr-1480 and Ser-1483. Phosphorylation by MAPK1 and MAPK3 inhibits GAP function and localizes ARGHAP35 away from newly forming focal adhesions and stress fibers in cells spreading on fibronectin. Phosphorylation at Ser-1476 and Thr-1480 by GSK3B requires priming by MAPK and inhibits RhoGAP activity and modulates polarized cell migration. As to expression, ubiquitously expressed.

The protein localises to the cytoplasm. The protein resides in the cytoskeleton. Its subcellular location is the cilium basal body. It is found in the nucleus. It localises to the cell membrane. Functionally, rho GTPase-activating protein (GAP). Binds several acidic phospholipids which inhibits the Rho GAP activity to promote the Rac GAP activity. This binding is inhibited by phosphorylation by PRKCA. Involved in cell differentiation as well as cell adhesion and migration, plays an important role in retinal tissue morphogenesis, neural tube fusion, midline fusion of the cerebral hemispheres and mammary gland branching morphogenesis. Transduces signals from p21-ras to the nucleus, acting via the ras GTPase-activating protein (GAP). Transduces SRC-dependent signals from cell-surface adhesion molecules, such as laminin, to promote neurite outgrowth. Regulates axon outgrowth, guidance and fasciculation. Modulates Rho GTPase-dependent F-actin polymerization, organization and assembly, is involved in polarized cell migration and in the positive regulation of ciliogenesis and cilia elongation. During mammary gland development, is required in both the epithelial and stromal compartments for ductal outgrowth. Represses transcription of the glucocorticoid receptor by binding to the cis-acting regulatory sequence 5'-GAGAAAAGAAACTGGAGAAACTC-3'; this function is however unclear and would need additional experimental evidences. In Rattus norvegicus (Rat), this protein is Rho GTPase-activating protein 35.